The following is a 492-amino-acid chain: Katanin p60 ATPase-containing subunit A1 (492 aa).

Positions 80–186 are disordered; it reads STPPKASQQE…ESEPKKFDST (107 aa). Residues 145-171 are compositionally biased toward basic and acidic residues; it reads PNDKGKAVRGREKKDQQNKGKEEKSKS. 250–257 provides a ligand contact to ATP; that stretch reads GPPGTGKT.

Belongs to the AAA ATPase family. Katanin p60 subunit A1 subfamily. In terms of assembly, can homooligomerize into hexameric rings, which may be promoted by interaction with microtubules. Interacts with KATNB1, which may serve as a targeting subunit.

It localises to the cytoplasm. It is found in the cytoskeleton. The protein resides in the microtubule organizing center. Its subcellular location is the centrosome. The protein localises to the spindle pole. It localises to the spindle. It carries out the reaction n ATP + n H2O + a microtubule = n ADP + n phosphate + (n+1) alpha/beta tubulin heterodimers.. ATPase activity is stimulated by microtubules, which promote homooligomerization. ATP-dependent microtubule severing is stimulated by interaction with KATNB1. In terms of biological role, catalytic subunit of a complex which severs microtubules in an ATP-dependent manner. Microtubule severing may promote rapid reorganization of cellular microtubule arrays and the release of microtubules from the centrosome following nucleation. This is Katanin p60 ATPase-containing subunit A1 from Gallus gallus (Chicken).